We begin with the raw amino-acid sequence, 427 residues long: Histidine--tRNA ligase (427 aa).

It belongs to the class-II aminoacyl-tRNA synthetase family. Homodimer.

The protein resides in the cytoplasm. The catalysed reaction is tRNA(His) + L-histidine + ATP = L-histidyl-tRNA(His) + AMP + diphosphate + H(+). The chain is Histidine--tRNA ligase from Alteromonas mediterranea (strain DSM 17117 / CIP 110805 / LMG 28347 / Deep ecotype).